The chain runs to 585 residues: A-type ATP synthase subunit A (585 aa).

237–244 (GPFGSGKT) contacts ATP.

Belongs to the ATPase alpha/beta chains family. In terms of assembly, has multiple subunits with at least A(3), B(3), C, D, E, F, H, I and proteolipid K(x).

Its subcellular location is the cell membrane. It carries out the reaction ATP + H2O + 4 H(+)(in) = ADP + phosphate + 5 H(+)(out). Functionally, component of the A-type ATP synthase that produces ATP from ADP in the presence of a proton gradient across the membrane. The A chain is the catalytic subunit. This is A-type ATP synthase subunit A from Natronomonas pharaonis (strain ATCC 35678 / DSM 2160 / CIP 103997 / JCM 8858 / NBRC 14720 / NCIMB 2260 / Gabara) (Halobacterium pharaonis).